Here is a 668-residue protein sequence, read N- to C-terminus: DNA ligase (668 aa).

Residues 32-36 (DVEYD), 81-82 (SL), and Glu-111 each bind NAD(+). The active-site N6-AMP-lysine intermediate is Lys-113. NAD(+)-binding residues include Arg-134, Glu-171, Lys-290, and Lys-314. Residues Cys-408, Cys-411, Cys-426, and Cys-432 each coordinate Zn(2+). The BRCT domain occupies 591–668 (EEDLSLKGQT…DEEALIAILS (78 aa)).

This sequence belongs to the NAD-dependent DNA ligase family. LigA subfamily. Mg(2+) is required as a cofactor. Mn(2+) serves as cofactor.

It catalyses the reaction NAD(+) + (deoxyribonucleotide)n-3'-hydroxyl + 5'-phospho-(deoxyribonucleotide)m = (deoxyribonucleotide)n+m + AMP + beta-nicotinamide D-nucleotide.. Its function is as follows. DNA ligase that catalyzes the formation of phosphodiester linkages between 5'-phosphoryl and 3'-hydroxyl groups in double-stranded DNA using NAD as a coenzyme and as the energy source for the reaction. It is essential for DNA replication and repair of damaged DNA. The protein is DNA ligase of Shewanella piezotolerans (strain WP3 / JCM 13877).